We begin with the raw amino-acid sequence, 95 residues long: Co-chaperonin GroES (95 aa).

It belongs to the GroES chaperonin family. As to quaternary structure, heptamer of 7 subunits arranged in a ring. Interacts with the chaperonin GroEL.

It is found in the cytoplasm. Functionally, together with the chaperonin GroEL, plays an essential role in assisting protein folding. The GroEL-GroES system forms a nano-cage that allows encapsulation of the non-native substrate proteins and provides a physical environment optimized to promote and accelerate protein folding. GroES binds to the apical surface of the GroEL ring, thereby capping the opening of the GroEL channel. The protein is Co-chaperonin GroES of Rickettsia canadensis (strain McKiel).